A 133-amino-acid chain; its full sequence is Small ribosomal subunit protein eS24y (133 aa).

The tract at residues lysine 104–lysine 133 is disordered. Residues isoleucine 109 to threonine 125 show a composition bias toward basic residues.

The protein belongs to the eukaryotic ribosomal protein eS24 family.

This Arabidopsis thaliana (Mouse-ear cress) protein is Small ribosomal subunit protein eS24y (RPS24B).